The primary structure comprises 345 residues: Quinolinate synthase (345 aa).

Residues histidine 69 and serine 87 each coordinate iminosuccinate. Cysteine 132 serves as a coordination point for [4Fe-4S] cluster. Residues 158-160 (YVN) and serine 175 each bind iminosuccinate. A [4Fe-4S] cluster-binding site is contributed by cysteine 217. Residues 243–245 (HPE) and threonine 260 each bind iminosuccinate. [4Fe-4S] cluster is bound at residue cysteine 303.

Belongs to the quinolinate synthase family. Type 2 subfamily. It depends on [4Fe-4S] cluster as a cofactor.

The protein localises to the cytoplasm. The enzyme catalyses iminosuccinate + dihydroxyacetone phosphate = quinolinate + phosphate + 2 H2O + H(+). Its pathway is cofactor biosynthesis; NAD(+) biosynthesis; quinolinate from iminoaspartate: step 1/1. In terms of biological role, catalyzes the condensation of iminoaspartate with dihydroxyacetone phosphate to form quinolinate. This chain is Quinolinate synthase, found in Agrobacterium fabrum (strain C58 / ATCC 33970) (Agrobacterium tumefaciens (strain C58)).